Consider the following 314-residue polypeptide: MTQTLPAGLTATATVAASSANLGPGFDSLGLALSLYDEIVVETVDSGLTVTVEGEGAGQVALDSSHLVVRAIEAGLRATGCIAPGLVVRCRNDIPHSRGLGSSAAAVVGGLAAANGLVSQTDWTPLTVEQLIQLSSAFEGHPDNAAAAVLGGAVVTWTDGAGAQARYAAAPLRVHPDIHLFPAIPQQRSSTAETRVLLPDTVSHTDARFNLSRAALLVVALTERPDLLMAATEDVLHQPQRAAAMPASAEFLRVLRGCGVAAVLSGAGPAVIALSTEPVLPAEAVEFGIANGFTIAEMAVGDGVRWSTGVAAGR.

95–105 (PHSRGLGSSAA) lines the ATP pocket.

This sequence belongs to the GHMP kinase family. Homoserine kinase subfamily.

The protein resides in the cytoplasm. The enzyme catalyses L-homoserine + ATP = O-phospho-L-homoserine + ADP + H(+). The protein operates within amino-acid biosynthesis; L-threonine biosynthesis; L-threonine from L-aspartate: step 4/5. Catalyzes the ATP-dependent phosphorylation of L-homoserine to L-homoserine phosphate. This chain is Homoserine kinase, found in Mycobacterium sp. (strain KMS).